A 626-amino-acid chain; its full sequence is MRMLLIHADYLEYEVRDKALKNPEPISDEQRKGRLDEVLAVFISVEKVDEANPEEVVGKAVAEIEDVAKQVKAERIFVYPFAHLSSELAKPDVALEVLKKIEEKLKEKGYEVKRAPFGYYKAFKLSCKGHPLAELSRTIVPEEGVSKEERNIALEKEEKELVSYWYILTPEGELIEVDKFDFTGHENLRKFVNYEIAKNRIADREPPHVRLMLEHELVDYEPGSDAGNLRYYPKGRLIKGLLEQYVTEKVVEYGAMEVETPIMYDFEHPALEKYLNRFPARQYIVKSGDKKFFLRFAACFGQFLIKKDAIISYRNLPLRMYELTRYSFRREKSGELSGLRRLRAFTMPDMHTVAKDLKQAMDEFKKQYKLSMEVLRGVGLTPDDYEVAIRFTHDFWEANKDFIVELAKIIGKPVLIEMWDQRFFYFILKFEFNFVDNLDKAAALSTVQIDVENAERFGITYYDEEGKERYPLILHCSPSGAIERVMYAILEKQAKLQAQGKKPMFPLWLSPIQVRVIPVSDDVLDYALYVAGKLEGAKIRVDVDDTNDRLNKKIRKAEKEWVPYIIVVGKNEKEQNTVTVRRREDGKQVEMQLEDLIREIRQKTEGFPYKPRPLPLLLSRRPKFRG.

The tract at residues 1–144 (MRMLLIHADY…LSRTIVPEEG (144 aa)) is editing domain. The interval 207-506 (PHVRLMLEHE…QAQGKKPMFP (300 aa)) is catalytic. Positions 299, 351, and 475 each coordinate Zn(2+).

It belongs to the class-II aminoacyl-tRNA synthetase family. Homodimer. It depends on Zn(2+) as a cofactor.

The protein resides in the cytoplasm. It catalyses the reaction tRNA(Thr) + L-threonine + ATP = L-threonyl-tRNA(Thr) + AMP + diphosphate + H(+). Its function is as follows. Catalyzes the attachment of threonine to tRNA(Thr) in a two-step reaction: L-threonine is first activated by ATP to form Thr-AMP and then transferred to the acceptor end of tRNA(Thr). Also edits incorrectly charged L-seryl-tRNA(Thr). The polypeptide is Threonine--tRNA ligase (Thermococcus gammatolerans (strain DSM 15229 / JCM 11827 / EJ3)).